Here is a 165-residue protein sequence, read N- to C-terminus: Small ribosomal subunit protein uS5 (165 aa).

The S5 DRBM domain maps to 13-76; it reads LEEKVLVVNR…EAARKNLITI (64 aa).

This sequence belongs to the universal ribosomal protein uS5 family. As to quaternary structure, part of the 30S ribosomal subunit. Contacts proteins S4 and S8.

Its function is as follows. With S4 and S12 plays an important role in translational accuracy. Located at the back of the 30S subunit body where it stabilizes the conformation of the head with respect to the body. The polypeptide is Small ribosomal subunit protein uS5 (Chlamydia caviae (strain ATCC VR-813 / DSM 19441 / 03DC25 / GPIC) (Chlamydophila caviae)).